Reading from the N-terminus, the 275-residue chain is Thiazole synthase (275 aa).

Lysine 116 functions as the Schiff-base intermediate with DXP in the catalytic mechanism. 1-deoxy-D-xylulose 5-phosphate contacts are provided by residues glycine 177, 203–204, and 225–226; these read AG and NT.

The protein belongs to the ThiG family. In terms of assembly, homotetramer. Forms heterodimers with either ThiH or ThiS.

It is found in the cytoplasm. It carries out the reaction [ThiS sulfur-carrier protein]-C-terminal-Gly-aminoethanethioate + 2-iminoacetate + 1-deoxy-D-xylulose 5-phosphate = [ThiS sulfur-carrier protein]-C-terminal Gly-Gly + 2-[(2R,5Z)-2-carboxy-4-methylthiazol-5(2H)-ylidene]ethyl phosphate + 2 H2O + H(+). It functions in the pathway cofactor biosynthesis; thiamine diphosphate biosynthesis. In terms of biological role, catalyzes the rearrangement of 1-deoxy-D-xylulose 5-phosphate (DXP) to produce the thiazole phosphate moiety of thiamine. Sulfur is provided by the thiocarboxylate moiety of the carrier protein ThiS. In vitro, sulfur can be provided by H(2)S. The chain is Thiazole synthase from Acaryochloris marina (strain MBIC 11017).